The primary structure comprises 384 residues: Alanine racemase (384 aa).

Residue Lys-39 is the Proton acceptor; specific for D-alanine of the active site. At Lys-39 the chain carries N6-(pyridoxal phosphate)lysine. Arg-136 contributes to the substrate binding site. The Proton acceptor; specific for L-alanine role is filled by Tyr-265. Met-312 lines the substrate pocket.

It belongs to the alanine racemase family. Requires pyridoxal 5'-phosphate as cofactor.

It carries out the reaction L-alanine = D-alanine. It participates in amino-acid biosynthesis; D-alanine biosynthesis; D-alanine from L-alanine: step 1/1. Catalyzes the interconversion of L-alanine and D-alanine. May also act on other amino acids. The chain is Alanine racemase (alr) from Geobacillus kaustophilus (strain HTA426).